A 183-amino-acid polypeptide reads, in one-letter code: uncharacterized protein (183 aa).

This is an uncharacterized protein from Methanocaldococcus jannaschii (strain ATCC 43067 / DSM 2661 / JAL-1 / JCM 10045 / NBRC 100440) (Methanococcus jannaschii).